The following is a 629-amino-acid chain: Iron multicopper oxidase fer1 (629 aa).

A signal peptide spans 1-29; sequence MVAPQRRTVMPALGLLASSLCSLLLTANA. Plastocyanin-like domains are found at residues 44–164 and 175–338; these read VNPD…IHPD and DDYT…TISY. N58 and N69 each carry an N-linked (GlcNAc...) asparagine glycan. 2 residues coordinate Cu cation: H91 and H93. Residue N98 is glycosylated (N-linked (GlcNAc...) asparagine). Cu cation contacts are provided by H144 and H146. Residues N188, N222, N236, N253, N303, N331, and N398 are each glycosylated (N-linked (GlcNAc...) asparagine). In terms of domain architecture, Plastocyanin-like 3 spans 401–537; the sequence is YVAPQVPALF…LASIFIEAPD (137 aa). Cu cation contacts are provided by H452, H455, and H457. The N-linked (GlcNAc...) asparagine glycan is linked to N482. Cu cation-binding residues include H517, C518, H519, and H523. N-linked (GlcNAc...) asparagine glycosylation occurs at N569. The helical transmembrane segment at 592 to 612 threads the bilayer; that stretch reads AIAAFTGCIITGLLGLATVVV.

Belongs to the multicopper oxidase family. Requires Cu cation as cofactor.

The protein localises to the cell membrane. Functionally, iron transport multicopper oxidase, which is required for Fe(2+) high affinity uptake. May be required to oxidize Fe(2+) and release it from the transporter. Essential component of copper-dependent iron transport. In Mycosarcoma maydis (Corn smut fungus), this protein is Iron multicopper oxidase fer1.